The chain runs to 193 residues: Putative protein-glutamate methylesterase/protein-glutamine glutaminase (193 aa).

The CheB-type methylesterase domain maps to 1 to 179; sequence MNYEAIVIGV…DYVLSLEKIA (179 aa). Active-site residues include S11, H38, and D131.

This sequence belongs to the CheB family.

The protein localises to the cytoplasm. It catalyses the reaction [protein]-L-glutamate 5-O-methyl ester + H2O = L-glutamyl-[protein] + methanol + H(+). The enzyme catalyses L-glutaminyl-[protein] + H2O = L-glutamyl-[protein] + NH4(+). Its function is as follows. May be involved in chemotaxis. The polypeptide is Putative protein-glutamate methylesterase/protein-glutamine glutaminase (cheB2) (Leptospira interrogans serogroup Icterohaemorrhagiae serovar copenhageni (strain Fiocruz L1-130)).